We begin with the raw amino-acid sequence, 81 residues long: Sec-independent protein translocase protein TatA (81 aa).

Residues 1-21 traverse the membrane as a helical segment; sequence MGGISIWQLLIVALIVILLFG. The disordered stretch occupies residues 34–81; the sequence is GAVKGFKNAMTPEDENKSLDDKEKDQTAATSQQAAEKQPETESKDKQA. 2 stretches are compositionally biased toward basic and acidic residues: residues 47–59 and 70–81; these read DENK…EKDQ and KQPETESKDKQA.

The protein belongs to the TatA/E family. The Tat system comprises two distinct complexes: a TatABC complex, containing multiple copies of TatA, TatB and TatC subunits, and a separate TatA complex, containing only TatA subunits. Substrates initially bind to the TatABC complex, which probably triggers association of the separate TatA complex to form the active translocon.

It is found in the cell inner membrane. Part of the twin-arginine translocation (Tat) system that transports large folded proteins containing a characteristic twin-arginine motif in their signal peptide across membranes. TatA could form the protein-conducting channel of the Tat system. The protein is Sec-independent protein translocase protein TatA of Shewanella frigidimarina (strain NCIMB 400).